A 786-amino-acid chain; its full sequence is Endonuclease MutS2 (786 aa).

Position 335–342 (335–342) interacts with ATP; sequence GPNTGGKT. Residues 711–786 enclose the Smr domain; the sequence is LDLRGERFEN…GLGVTVVELK (76 aa).

Belongs to the DNA mismatch repair MutS family. MutS2 subfamily. Homodimer. Binds to stalled ribosomes, contacting rRNA.

Endonuclease that is involved in the suppression of homologous recombination and thus may have a key role in the control of bacterial genetic diversity. In terms of biological role, acts as a ribosome collision sensor, splitting the ribosome into its 2 subunits. Detects stalled/collided 70S ribosomes which it binds and splits by an ATP-hydrolysis driven conformational change. Acts upstream of the ribosome quality control system (RQC), a ribosome-associated complex that mediates the extraction of incompletely synthesized nascent chains from stalled ribosomes and their subsequent degradation. Probably generates substrates for RQC. This chain is Endonuclease MutS2, found in Bacillus anthracis (strain A0248).